A 227-amino-acid polypeptide reads, in one-letter code: ATP synthase F(0) complex subunit a (227 aa).

Helical transmembrane passes span 9 to 29 (FASP…LPWV), 69 to 89 (WALL…LGLL), 98 to 118 (QLSL…IIGM), 132 to 152 (EGTP…SLFI), 165 to 185 (LTAG…LMPM), and 190 to 210 (AILT…VAMI).

Belongs to the ATPase A chain family. As to quaternary structure, component of the ATP synthase complex composed at least of ATP5F1A/subunit alpha, ATP5F1B/subunit beta, ATP5MC1/subunit c (homooctomer), MT-ATP6/subunit a, MT-ATP8/subunit 8, ATP5ME/subunit e, ATP5MF/subunit f, ATP5MG/subunit g, ATP5MK/subunit k, ATP5MJ/subunit j, ATP5F1C/subunit gamma, ATP5F1D/subunit delta, ATP5F1E/subunit epsilon, ATP5PF/subunit F6, ATP5PB/subunit b, ATP5PD/subunit d, ATP5PO/subunit OSCP. ATP synthase complex consists of a soluble F(1) head domain (subunits alpha(3) and beta(3)) - the catalytic core - and a membrane F(0) domain - the membrane proton channel (subunits c, a, 8, e, f, g, k and j). These two domains are linked by a central stalk (subunits gamma, delta, and epsilon) rotating inside the F1 region and a stationary peripheral stalk (subunits F6, b, d, and OSCP). Interacts with DNAJC30; interaction is direct.

Its subcellular location is the mitochondrion inner membrane. It catalyses the reaction H(+)(in) = H(+)(out). Subunit a, of the mitochondrial membrane ATP synthase complex (F(1)F(0) ATP synthase or Complex V) that produces ATP from ADP in the presence of a proton gradient across the membrane which is generated by electron transport complexes of the respiratory chain. ATP synthase complex consist of a soluble F(1) head domain - the catalytic core - and a membrane F(1) domain - the membrane proton channel. These two domains are linked by a central stalk rotating inside the F(1) region and a stationary peripheral stalk. During catalysis, ATP synthesis in the catalytic domain of F(1) is coupled via a rotary mechanism of the central stalk subunits to proton translocation. With the subunit c (ATP5MC1), forms the proton-conducting channel in the F(0) domain, that contains two crucial half-channels (inlet and outlet) that facilitate proton movement from the mitochondrial intermembrane space (IMS) into the matrix. Protons are taken up via the inlet half-channel and released through the outlet half-channel, following a Grotthuss mechanism. The sequence is that of ATP synthase F(0) complex subunit a from Carassius auratus (Goldfish).